Consider the following 481-residue polypeptide: GTPase Obg (481 aa).

The Obg domain maps to 2–159; sequence TTFVDRVVLH…LDAVLELKSV (158 aa). The OBG-type G domain occupies 160–330; it reads ADIGLVGYPS…LMFAMGELVA (171 aa). Residues 166 to 173, 191 to 195, 212 to 215, 282 to 285, and 311 to 313 contribute to the GTP site; these read GYPSAGKS, FTTLV, DVPG, NKID, and SAA. Serine 173 and threonine 193 together coordinate Mg(2+). An OCT domain is found at 348-426; it reads PKAVDDAGFT…IGEREFDWHP (79 aa). A disordered region spans residues 440–481; the sequence is DQRLAEKTQRPSAAERLAARKARRQRPGDEPESDELDGDSGE. Over residues 469–481 the composition is skewed to acidic residues; the sequence is EPESDELDGDSGE.

The protein belongs to the TRAFAC class OBG-HflX-like GTPase superfamily. OBG GTPase family. In terms of assembly, monomer. It depends on Mg(2+) as a cofactor.

Its subcellular location is the cytoplasm. Functionally, an essential GTPase which binds GTP, GDP and possibly (p)ppGpp with moderate affinity, with high nucleotide exchange rates and a fairly low GTP hydrolysis rate. Plays a role in control of the cell cycle, stress response, ribosome biogenesis and in those bacteria that undergo differentiation, in morphogenesis control. The protein is GTPase Obg of Salinispora arenicola (strain CNS-205).